Reading from the N-terminus, the 447-residue chain is 3-phosphoshikimate 1-carboxyvinyltransferase (447 aa).

The 3-phosphoshikimate site is built by Lys25, Ser26, and Arg30. Lys25 serves as a coordination point for phosphoenolpyruvate. Gly96 and Arg124 together coordinate phosphoenolpyruvate. 6 residues coordinate 3-phosphoshikimate: Ser171, Ser172, Gln173, Ser203, Asp325, and Lys352. Gln173 is a phosphoenolpyruvate binding site. Asp325 functions as the Proton acceptor in the catalytic mechanism. The phosphoenolpyruvate site is built by Arg356, Arg400, and Lys425.

This sequence belongs to the EPSP synthase family. Monomer.

It is found in the cytoplasm. It carries out the reaction 3-phosphoshikimate + phosphoenolpyruvate = 5-O-(1-carboxyvinyl)-3-phosphoshikimate + phosphate. It functions in the pathway metabolic intermediate biosynthesis; chorismate biosynthesis; chorismate from D-erythrose 4-phosphate and phosphoenolpyruvate: step 6/7. Catalyzes the transfer of the enolpyruvyl moiety of phosphoenolpyruvate (PEP) to the 5-hydroxyl of shikimate-3-phosphate (S3P) to produce enolpyruvyl shikimate-3-phosphate and inorganic phosphate. This Bordetella petrii (strain ATCC BAA-461 / DSM 12804 / CCUG 43448) protein is 3-phosphoshikimate 1-carboxyvinyltransferase.